We begin with the raw amino-acid sequence, 513 residues long: ATP synthase subunit alpha (513 aa).

Residue Gly172–Thr179 participates in ATP binding.

This sequence belongs to the ATPase alpha/beta chains family. As to quaternary structure, F-type ATPases have 2 components, CF(1) - the catalytic core - and CF(0) - the membrane proton channel. CF(1) has five subunits: alpha(3), beta(3), gamma(1), delta(1), epsilon(1). CF(0) has three main subunits: a(1), b(2) and c(9-12). The alpha and beta chains form an alternating ring which encloses part of the gamma chain. CF(1) is attached to CF(0) by a central stalk formed by the gamma and epsilon chains, while a peripheral stalk is formed by the delta and b chains.

The protein resides in the cell inner membrane. It catalyses the reaction ATP + H2O + 4 H(+)(in) = ADP + phosphate + 5 H(+)(out). Its function is as follows. Produces ATP from ADP in the presence of a proton gradient across the membrane. The alpha chain is a regulatory subunit. This Gluconacetobacter diazotrophicus (strain ATCC 49037 / DSM 5601 / CCUG 37298 / CIP 103539 / LMG 7603 / PAl5) protein is ATP synthase subunit alpha.